Reading from the N-terminus, the 523-residue chain is 2,3-bisphosphoglycerate-independent phosphoglycerate mutase (523 aa).

Residues Asp13 and Ser63 each coordinate Mn(2+). The Phosphoserine intermediate role is filled by Ser63. Residues His124, 156–157 (RD), Arg188, Arg194, 268–271 (RSDR), and Lys341 contribute to the substrate site. The Mn(2+) site is built by Asp408, His412, Asp449, His450, and His467.

The protein belongs to the BPG-independent phosphoglycerate mutase family. Monomer. Mn(2+) serves as cofactor.

The enzyme catalyses (2R)-2-phosphoglycerate = (2R)-3-phosphoglycerate. It functions in the pathway carbohydrate degradation; glycolysis; pyruvate from D-glyceraldehyde 3-phosphate: step 3/5. Catalyzes the interconversion of 2-phosphoglycerate and 3-phosphoglycerate. The polypeptide is 2,3-bisphosphoglycerate-independent phosphoglycerate mutase (Salinibacter ruber (strain DSM 13855 / M31)).